The primary structure comprises 313 residues: Acetaldehyde dehydrogenase (313 aa).

An NAD(+)-binding site is contributed by 13 to 16 (SGNI). The Acyl-thioester intermediate role is filled by C133. NAD(+)-binding positions include 164 to 172 (SAGPGTRAN) and N291.

It belongs to the acetaldehyde dehydrogenase family.

The catalysed reaction is acetaldehyde + NAD(+) + CoA = acetyl-CoA + NADH + H(+). The chain is Acetaldehyde dehydrogenase from Cupriavidus pinatubonensis (strain JMP 134 / LMG 1197) (Cupriavidus necator (strain JMP 134)).